The primary structure comprises 206 residues: FMN-dependent NADH:quinone oxidoreductase 4 (206 aa).

Residues Ser-10 and 136 to 139 contribute to the FMN site; that span reads SSGG.

It belongs to the azoreductase type 1 family. As to quaternary structure, homodimer. FMN is required as a cofactor.

The enzyme catalyses 2 a quinone + NADH + H(+) = 2 a 1,4-benzosemiquinone + NAD(+). It carries out the reaction N,N-dimethyl-1,4-phenylenediamine + anthranilate + 2 NAD(+) = 2-(4-dimethylaminophenyl)diazenylbenzoate + 2 NADH + 2 H(+). Functionally, quinone reductase that provides resistance to thiol-specific stress caused by electrophilic quinones. Its function is as follows. Also exhibits azoreductase activity. Catalyzes the reductive cleavage of the azo bond in aromatic azo compounds to the corresponding amines. This is FMN-dependent NADH:quinone oxidoreductase 4 from Pseudomonas fluorescens (strain ATCC BAA-477 / NRRL B-23932 / Pf-5).